Consider the following 270-residue polypeptide: Glutamate racemase (270 aa).

Residues 10 to 11 and 42 to 43 contribute to the substrate site; these read DS and YG. The active-site Proton donor/acceptor is cysteine 74. A substrate-binding site is contributed by 75–76; the sequence is NT. Residue cysteine 189 is the Proton donor/acceptor of the active site. 190-191 is a substrate binding site; the sequence is TH.

Belongs to the aspartate/glutamate racemases family.

The catalysed reaction is L-glutamate = D-glutamate. Its pathway is cell wall biogenesis; peptidoglycan biosynthesis. Functionally, provides the (R)-glutamate required for cell wall biosynthesis. The protein is Glutamate racemase of Bartonella quintana (strain Toulouse) (Rochalimaea quintana).